We begin with the raw amino-acid sequence, 355 residues long: tRNA pseudouridine synthase D (355 aa).

D84 acts as the Nucleophile in catalysis. Positions 160 to 306 constitute a TRUD domain; that stretch reads GVPNYFGLQR…MAHERRILRL (147 aa).

The protein belongs to the pseudouridine synthase TruD family.

The enzyme catalyses uridine(13) in tRNA = pseudouridine(13) in tRNA. In terms of biological role, responsible for synthesis of pseudouridine from uracil-13 in transfer RNAs. The polypeptide is tRNA pseudouridine synthase D (Pseudomonas aeruginosa (strain ATCC 15692 / DSM 22644 / CIP 104116 / JCM 14847 / LMG 12228 / 1C / PRS 101 / PAO1)).